Here is a 107-residue protein sequence, read N- to C-terminus: Metallothionein-1 (107 aa).

The propeptide occupies 1–2 (MD).

Belongs to the metallothionein superfamily. Type 7 family.

The metallothioneins are involved in the cellular sequestration of toxic metal ions. Binds 12 cadmium ions per molecule. The sequence is that of Metallothionein-1 from Tetrahymena pyriformis.